We begin with the raw amino-acid sequence, 116 residues long: Large ribosomal subunit protein uL18 (116 aa).

It belongs to the universal ribosomal protein uL18 family. Part of the 50S ribosomal subunit; part of the 5S rRNA/L5/L18/L25 subcomplex. Contacts the 5S and 23S rRNAs.

This is one of the proteins that bind and probably mediate the attachment of the 5S RNA into the large ribosomal subunit, where it forms part of the central protuberance. The sequence is that of Large ribosomal subunit protein uL18 from Shewanella sp. (strain ANA-3).